We begin with the raw amino-acid sequence, 570 residues long: Glycine--tRNA ligase (570 aa).

Substrate is bound by residues Arg99 and Glu165. Residues 197-199, 207-212, 324-325, and 443-446 each bind ATP; these read RNE, LRLREF, EC, and GIDR. 212–216 contacts substrate; sequence FTQAE. A substrate-binding site is contributed by 439–443; sequence EPSFG.

Belongs to the class-II aminoacyl-tRNA synthetase family.

The protein localises to the cytoplasm. The enzyme catalyses tRNA(Gly) + glycine + ATP = glycyl-tRNA(Gly) + AMP + diphosphate. Catalyzes the attachment of glycine to tRNA(Gly). The sequence is that of Glycine--tRNA ligase from Thermococcus kodakarensis (strain ATCC BAA-918 / JCM 12380 / KOD1) (Pyrococcus kodakaraensis (strain KOD1)).